Here is a 477-residue protein sequence, read N- to C-terminus: Tripartite motif-containing protein 72 (477 aa).

Positions 14, 17, 29, 31, 34, 37, 53, 56, 86, 89, 97, 100, 105, 108, 114, and 117 each coordinate Zn(2+). Residues 16–59 form an RING-type zinc finger; the sequence is CQLCLELFRAPVTPECGHTFCQGCLTGVPKNQDQNGSTPCPTCQ. Residues 83–124 form a B box-type zinc finger; the sequence is VPQGHCLEHMDPLSVYCEQDKELICGVCASLGKHKGHNIITA. Residues 135–232 are a coiled coil; that stretch reads LPQQQVILQE…QMEGVLKDVE (98 aa). The region spanning 272–476 is the B30.2/SPRY domain; the sequence is DEFKFQVWRK…LKIFYPPAEQ (205 aa).

Belongs to the TRIM/RBCC family. As to quaternary structure, homodimer. Homooligomer; disulfide-linked. Oligomerizes on the phospholipid membrane. Disulfide bond formation at Cys-244 occurs in case of membrane damage that cause the entry of the oxidized milieu of the extracellular space, resulting in homooligomerization.

Its subcellular location is the cell membrane. It is found in the sarcolemma. It localises to the cytoplasmic vesicle membrane. The catalysed reaction is S-ubiquitinyl-[E2 ubiquitin-conjugating enzyme]-L-cysteine + [acceptor protein]-L-lysine = [E2 ubiquitin-conjugating enzyme]-L-cysteine + N(6)-ubiquitinyl-[acceptor protein]-L-lysine.. Its pathway is protein modification; protein ubiquitination. With respect to regulation, specifically binds phosphatidylserine. The binding to phospholipids enhances ubiquitination activity. Functionally, muscle-specific E3 ubiquitin-protein ligase that plays a central role in cell membrane repair by nucleating the assembly of the repair machinery at injury sites. Acts as a sensor of oxidation: upon membrane damage, entry of extracellular oxidative environment results in disulfide bond formation and homooligomerization at the injury site. This oligomerization acts as a nucleation site for recruitment of TRIM72-containing vesicles to the injury site, leading to membrane patch formation. Probably acts upstream of the Ca(2+)-dependent membrane resealing process. Required for transport of DYSF to sites of cell injury during repair patch formation. Regulates membrane budding and exocytosis. May be involved in the regulation of the mobility of KCNB1-containing endocytic vesicles. The chain is Tripartite motif-containing protein 72 (trim72) from Xenopus laevis (African clawed frog).